Reading from the N-terminus, the 118-residue chain is UPF0102 protein lpg2994 (118 aa).

This sequence belongs to the UPF0102 family.

This is UPF0102 protein lpg2994 from Legionella pneumophila subsp. pneumophila (strain Philadelphia 1 / ATCC 33152 / DSM 7513).